The chain runs to 1273 residues: MEYRNIKYGTKTERRNYSKMNYDIELPNLIEIQTKSFELFLKEGIKKILKDISPIESNNGDLKLYFDDFYLDKPKYNIEEAKNRDITYYAQLFAKARLENVLTKEIKESNILITELPLITPSGTFIINGTERVVISQIVRSSGIYFTKKFDSKIRYLAQLIPTRGAWIEYEQSNKDFLYAKLDRSKKIPLNKFICCLGFDTKEKIESTFGYNKFLDLSLKKDQILNINEAIIELHSKLHRGEKVPVDVAREFIFSKLFYAKKYDLLAVGRYKFNQKLDVLKRIKNTYLAKDLIDPETNEIFLSKKTFLNEEIIEKLKNKRNCFTFELVNADNNLENEINEEILTYANYNKDKILELYIKDNIINIKTGEILVEKDTLITEQVMNIIRKNGQFIHDKVSKYFLCNKDLYQKHKERKGVFNEVLEVYILDNLGNPKPTIKVIGNIQSENNKQHITVSDIIASISYYLNLYEDIGKTDDIDHLGNRRLRLIGELLTNQFRLGLIISEKNIKDKMSISKFNNITVNSLVNFTSLSAIIKTFFNSSRLSHFMDQINPLAELTQKRRVSALGTGGIDRDRAGIEIRDINNSHYAKLCPIETPEGPSIGLIASLSTYARVDKYCFIQTPYLKVIKNEQGQPKVSEHIDYLTADQEEKEVIASVTYLNSDNTFKEKKIIARKNGETGLHEIDKITYIDVSPKQIVSVATSSIPFLEHNDASRALMGANMQRQAVPLLIPESPIVGTGIEHRIAKDSGCLILAKNSGYVTYADAQKIVITEKPKKTITINNEVIYKNEEEFNYEKAKILHKKNVFSCQTEYKLINFAKSNQDTLILQKPLVLDGDFVNKNDIITDGPATHKEELALGRNVTVAFMTWEGYNYEDAIIISEDLVKNDIYTSVHIDKYEIQTRELKKGAGVEQITREVPNVSAEAIKNLDERGIIIPGSEVKEGDILVGKITSQGMVEQTAYERLINVIIGEKSREHKDSSLRVPCGEGGIVQSVKYFSKENNDILPPEVNENIRVYIAKKRKIKEGDKIAGRHGNKGVISLILPKEDLPYMKDGTTIDIILNPLGVPSRMNIGQILEMHLGIAAQKLNIKVATPVFDGVNNDDLRKIIKEAKLSLDGKMTLYDGRTGEPFDSSISVGVMYMIKLSHMVEDKLHSRNIGPYTLMAQQPMGGRNQNGGQRFGEMEVWSLYAYGAANSLQEILTIKSDDIIGRQKTYSAITNGLPLPKPSIPESFRVFAKELQALGLYVELINSKTKENEILKSLVENQKKGSNNR.

Belongs to the RNA polymerase beta chain family. As to quaternary structure, the RNAP catalytic core consists of 2 alpha, 1 beta, 1 beta' and 1 omega subunit. When a sigma factor is associated with the core the holoenzyme is formed, which can initiate transcription.

The enzyme catalyses RNA(n) + a ribonucleoside 5'-triphosphate = RNA(n+1) + diphosphate. In terms of biological role, DNA-dependent RNA polymerase catalyzes the transcription of DNA into RNA using the four ribonucleoside triphosphates as substrates. The polypeptide is DNA-directed RNA polymerase subunit beta (Phytoplasma mali (strain AT)).